An 88-amino-acid polypeptide reads, in one-letter code: Acylphosphatase (88 aa).

The Acylphosphatase-like domain occupies 3–88 (RLVALVKGRV…EAGLKGFHVY (86 aa)). Catalysis depends on residues Arg-18 and Asn-36.

The protein belongs to the acylphosphatase family.

The catalysed reaction is an acyl phosphate + H2O = a carboxylate + phosphate + H(+). This chain is Acylphosphatase (acyP), found in Thermus thermophilus (strain ATCC BAA-163 / DSM 7039 / HB27).